A 154-amino-acid polypeptide reads, in one-letter code: Methylglyoxal synthase (154 aa).

An MGS-like domain is found at 1 to 154; the sequence is MELTTRTIAA…RYMQQRLDLK (154 aa). Substrate-binding positions include His19, Lys23, 45-48, and 65-66; these read TGTT and SG. Asp71 acts as the Proton donor/acceptor in catalysis. His98 is a binding site for substrate.

It belongs to the methylglyoxal synthase family.

The catalysed reaction is dihydroxyacetone phosphate = methylglyoxal + phosphate. Its function is as follows. Catalyzes the formation of methylglyoxal from dihydroxyacetone phosphate. In Yersinia pseudotuberculosis serotype O:1b (strain IP 31758), this protein is Methylglyoxal synthase.